The primary structure comprises 200 residues: uncharacterized protein (200 aa).

Low complexity-rich tracts occupy residues 1–13 and 28–44; these read MTSA…AAES and PSPA…AGPR. Disordered stretches follow at residues 1–116 and 137–200; these read MTSA…GGPG and LPRD…SSFF. Positions 88 to 102 are enriched in basic residues; the sequence is RCGRPRRRDPRRRRT. Over residues 189-200 the composition is skewed to low complexity; sequence PSSSSGLLSSFF.

This is an uncharacterized protein from Homo sapiens (Human).